The sequence spans 521 residues: Bifunctional purine biosynthesis protein PurH (521 aa).

Residues 1–147 (MGEITRALIS…KNWEGVTVLV (147 aa)) enclose the MGS-like domain.

It belongs to the PurH family.

The enzyme catalyses (6R)-10-formyltetrahydrofolate + 5-amino-1-(5-phospho-beta-D-ribosyl)imidazole-4-carboxamide = 5-formamido-1-(5-phospho-D-ribosyl)imidazole-4-carboxamide + (6S)-5,6,7,8-tetrahydrofolate. The catalysed reaction is IMP + H2O = 5-formamido-1-(5-phospho-D-ribosyl)imidazole-4-carboxamide. The protein operates within purine metabolism; IMP biosynthesis via de novo pathway; 5-formamido-1-(5-phospho-D-ribosyl)imidazole-4-carboxamide from 5-amino-1-(5-phospho-D-ribosyl)imidazole-4-carboxamide (10-formyl THF route): step 1/1. Its pathway is purine metabolism; IMP biosynthesis via de novo pathway; IMP from 5-formamido-1-(5-phospho-D-ribosyl)imidazole-4-carboxamide: step 1/1. The chain is Bifunctional purine biosynthesis protein PurH from Acidithiobacillus ferrooxidans (strain ATCC 53993 / BNL-5-31) (Leptospirillum ferrooxidans (ATCC 53993)).